Here is a 126-residue protein sequence, read N- to C-terminus: 3-aminoacrylate deaminase RutC (126 aa).

This sequence belongs to the RutC family.

It catalyses the reaction (Z)-3-aminoacrylate + H2O + H(+) = 3-oxopropanoate + NH4(+). In terms of biological role, involved in pyrimidine catabolism. Catalyzes the deamination of 3-aminoacrylate to malonic semialdehyde, a reaction that can also occur spontaneously. RutC may facilitate the reaction and modulate the metabolic fitness, rather than catalyzing essential functions. This chain is 3-aminoacrylate deaminase RutC, found in Acinetobacter baylyi (strain ATCC 33305 / BD413 / ADP1).